The primary structure comprises 70 residues: DNA-directed RNA polymerase subunit omega (70 aa).

The protein belongs to the RNA polymerase subunit omega family. The RNAP catalytic core consists of 2 alpha, 1 beta, 1 beta' and 1 omega subunit. When a sigma factor is associated with the core the holoenzyme is formed, which can initiate transcription.

It catalyses the reaction RNA(n) + a ribonucleoside 5'-triphosphate = RNA(n+1) + diphosphate. Promotes RNA polymerase assembly. Latches the N- and C-terminal regions of the beta' subunit thereby facilitating its interaction with the beta and alpha subunits. The sequence is that of DNA-directed RNA polymerase subunit omega from Thermoanaerobacter sp. (strain X514).